The primary structure comprises 347 residues: uncharacterized protein (347 aa).

Disordered stretches follow at residues 1-40, 72-92, 133-158, 173-209, and 306-347; these read MAQE…SNSM, SCED…IQGS, SDST…QLTL, ENQK…QVSH, and EDPR…PPDF. Polar residues predominate over residues 15 to 25; that stretch reads PGQNITETTTD. Residues 143-154 show a composition bias toward basic and acidic residues; sequence GDNKDKHPKEKT. Residues 179–194 are compositionally biased toward acidic residues; sequence KDDDSVFPESAQEEDS. Polar residues predominate over residues 195 to 209; sequence QLPSSSLPGMAQVSH. Residues 306 to 318 show a composition bias toward basic and acidic residues; sequence EDPREANERPREL. Residues 319–330 show a composition bias toward basic residues; it reads ARKKRFSYRSKR.

This is an uncharacterized protein from Bos taurus (Bovine).